Here is a 382-residue protein sequence, read N- to C-terminus: Galactokinase (382 aa).

A substrate-binding site is contributed by 34–37; sequence EHTD. 124 to 130 is a binding site for ATP; it reads GAGLSSS. The Mg(2+) site is built by Ser-130 and Glu-162. Asp-174 functions as the Proton acceptor in the catalytic mechanism. Tyr-223 contributes to the substrate binding site.

It belongs to the GHMP kinase family. GalK subfamily.

It is found in the cytoplasm. The enzyme catalyses alpha-D-galactose + ATP = alpha-D-galactose 1-phosphate + ADP + H(+). It functions in the pathway carbohydrate metabolism; galactose metabolism. In terms of biological role, catalyzes the transfer of the gamma-phosphate of ATP to D-galactose to form alpha-D-galactose-1-phosphate (Gal-1-P). This Salmonella newport (strain SL254) protein is Galactokinase.